A 169-amino-acid polypeptide reads, in one-letter code: MGASQSAEQEARPEVVRIDRNEIPEEYKTVGVSSDVVSRVNATRVAGNDGESDRLRQELAREREEKARLREDMAKLSQLQQRKTAGISAAPVSISGNDLEERKKIFDDTVERVQKQFFAYHRENVCQDNENEIVRCLQENPGRVLKCAPLTEAFEKCVGEFRQQVLKGN.

Glycine 2 carries the N-myristoyl glycine lipid modification. One can recognise a CHCH domain in the interval glutamate 123–valine 165. 2 short sequence motifs (cx9C motif) span residues cysteine 126–cysteine 136 and cysteine 147–cysteine 157. 2 disulfides stabilise this stretch: cysteine 126–cysteine 157 and cysteine 136–cysteine 147.

It belongs to the MICOS complex subunit Mic19 family. Metazoan Mic19 subfamily. Component of the mitochondrial contact site and cristae organizing system (MICOS) complex.

The protein localises to the mitochondrion inner membrane. Its function is as follows. Plays a role in maintaining mitochondrial morphology. May act as a component of the MICOS complex, a large protein complex of the mitochondria. The protein is MICOS complex subunit MIC19 of Caenorhabditis elegans.